Here is a 941-residue protein sequence, read N- to C-terminus: PHD finger protein 14 (941 aa).

The interval 22-295 (DYDSSDDSDF…LSQSKSNEDS (274 aa)) is disordered. Residues Ser-26 and Ser-29 each carry the phosphoserine modification. The segment covering 36–47 (ASDSEGSGNGSE) has biased composition (low complexity). Positions 60–72 (DSEENILEEELNE) are enriched in acidic residues. Basic and acidic residues-rich tracts occupy residues 74–85 (IQVKEEQLKNST), 94–109 (QLIKMEKKEEEENGER), and 116–132 (KEKEKEKEREKDKEKAT). Residue Ser-84 is modified to Phosphoserine. Low complexity predominate over residues 133-166 (VSDSAAASAAGTTPATSPPAVTSPSVPTTTTTTT). Phosphoserine is present on Ser-189. Composition is skewed to acidic residues over residues 194–205 (NAMDDYDSEDDN) and 226–249 (DGDNEDDDDEGSGSEEDENDEGND). A Phosphotyrosine modification is found at Tyr-199. Ser-201 carries the post-translational modification Phosphoserine. Thr-280 bears the Phosphothreonine mark. Residues 281–290 (NDSLTLSQSK) show a composition bias toward polar residues. A phosphoserine mark is found at Ser-283, Ser-287, Ser-291, Ser-295, and Ser-301. A PHD-type 1 zinc finger spans residues 312-373 (ILICCVCLGD…PWFCDACKCG (62 aa)). Zn(2+)-binding residues include Cys-315, Cys-318, Cys-332, Cys-335, His-340, and Cys-343. Ser-352 bears the Phosphoserine mark. 14 residues coordinate Zn(2+): Cys-367, Cys-370, Cys-378, Cys-381, His-398, Cys-401, Cys-434, Cys-437, Cys-451, Cys-456, His-461, Cys-464, Cys-488, and His-491. The segment at 375–408 (SPSCELCPNQDGIFKETDAGRWVHIVCALYVPGV) adopts a C2HC pre-PHD-type zinc-finger fold. Residues 432–492 (KECSFCEDPR…PFFAYCKQHA (61 aa)) form a PHD-type 2 zinc finger. Ser-523 is modified (phosphoserine). A coiled-coil region spans residues 623–671 (MIQIQENMAEQKNIKDKLENEQEKLHVEYNKLCESLEELQNLNGKLRSE). The segment at 718–772 (LYSCGICKKNHDQHLLLLCDTCKLHYHLGCLDPPLTRMPRKTKNSYWQCSECDQA) adopts a PHD-type 3 zinc-finger fold. Positions 721, 724, 736, 739, 744, 747, 766, and 769 each coordinate Zn(2+). Ser-774, Ser-775, and Ser-828 each carry phosphoserine. Positions 804 to 855 (VPQDVPPEPKKIPIRNTRTRGRKRSFVPEEEKHEERVPRERRQRQSVLQKKP) are disordered. The segment covering 829–843 (FVPEEEKHEERVPRE) has biased composition (basic and acidic residues). The segment at 861-914 (RTECSTCKGTGDNENLVRCDECRLCYHFGCLDPPLKKSPKQTGYGWICQECDSS) adopts a PHD-type 4 zinc-finger fold. Zn(2+)-binding residues include Cys-864, Cys-867, Cys-879, Cys-882, His-887, Cys-890, Cys-908, and Cys-911. The segment at 912-941 (DSSSSKEDENEAEKKNASQELSMEQKTPKK) is disordered. Basic and acidic residues predominate over residues 915-928 (SSKEDENEAEKKNA). The segment covering 930–941 (QELSMEQKTPKK) has biased composition (polar residues).

High levels detected in testis, lung and spleen and low levels in muscle, heart, intestine and kidney (at protein level). Widely expressed in adult with increased levels in intestine, colon and lung.

It localises to the nucleus. It is found in the chromosome. The protein localises to the cytoplasm. In terms of biological role, histone-binding protein. Binds preferentially to unmodified histone H3 but can also bind to a lesser extent to histone H3 trimethylated at 'Lys-9' (H3K9me3) as well as to histone H3 monomethylated at 'Lys-27' (H3K27ac) and trimethylated at 'Lys-27' (H3K27me3). Represses PDGFRA expression, thus playing a role in regulation of mesenchymal cell proliferation. Suppresses the expression of CDKN1A/p21 by reducing the level of trimethylation of histone H3 'Lys-4', leading to enhanced proliferation of germinal center B cells. The chain is PHD finger protein 14 (Phf14) from Mus musculus (Mouse).